A 105-amino-acid polypeptide reads, in one-letter code: Nitrogenase-stabilizing/protective protein NifW 1 (105 aa).

The protein belongs to the NifW family. Homotrimer; associates with NifD.

Functionally, may protect the nitrogenase Fe-Mo protein from oxidative damage. In Trichormus variabilis (strain ATCC 29413 / PCC 7937) (Anabaena variabilis), this protein is Nitrogenase-stabilizing/protective protein NifW 1.